A 471-amino-acid chain; its full sequence is 3-isopropylmalate dehydratase large subunit (471 aa).

Cys-347, Cys-407, and Cys-410 together coordinate [4Fe-4S] cluster.

This sequence belongs to the aconitase/IPM isomerase family. LeuC type 1 subfamily. In terms of assembly, heterodimer of LeuC and LeuD. [4Fe-4S] cluster serves as cofactor.

It catalyses the reaction (2R,3S)-3-isopropylmalate = (2S)-2-isopropylmalate. It functions in the pathway amino-acid biosynthesis; L-leucine biosynthesis; L-leucine from 3-methyl-2-oxobutanoate: step 2/4. Catalyzes the isomerization between 2-isopropylmalate and 3-isopropylmalate, via the formation of 2-isopropylmaleate. The protein is 3-isopropylmalate dehydratase large subunit of Granulibacter bethesdensis (strain ATCC BAA-1260 / CGDNIH1).